Reading from the N-terminus, the 92-residue chain is MARVTVEDAVEQIGNRFDMILVAARRARQIAVQGKDPMVEEMNDKPTVIALREIELGLVNAHTLDADERQTVREREAAEIAAVAAIAEGRSL.

It belongs to the RNA polymerase subunit omega family. As to quaternary structure, the RNAP catalytic core consists of 2 alpha, 1 beta, 1 beta' and 1 omega subunit. When a sigma factor is associated with the core the holoenzyme is formed, which can initiate transcription.

It catalyses the reaction RNA(n) + a ribonucleoside 5'-triphosphate = RNA(n+1) + diphosphate. Its function is as follows. Promotes RNA polymerase assembly. Latches the N- and C-terminal regions of the beta' subunit thereby facilitating its interaction with the beta and alpha subunits. The polypeptide is DNA-directed RNA polymerase subunit omega (Shewanella oneidensis (strain ATCC 700550 / JCM 31522 / CIP 106686 / LMG 19005 / NCIMB 14063 / MR-1)).